The sequence spans 142 residues: Transcriptional regulator MraZ (142 aa).

2 consecutive SpoVT-AbrB domains span residues 5–47 and 76–119; these read EYPY…PLAS and ANKA…NPER.

This sequence belongs to the MraZ family. In terms of assembly, forms oligomers.

The protein resides in the cytoplasm. Its subcellular location is the nucleoid. This chain is Transcriptional regulator MraZ, found in Deinococcus geothermalis (strain DSM 11300 / CIP 105573 / AG-3a).